Reading from the N-terminus, the 208-residue chain is Protein-L-isoaspartate O-methyltransferase (208 aa).

Residue Ser59 is part of the active site.

The protein belongs to the methyltransferase superfamily. L-isoaspartyl/D-aspartyl protein methyltransferase family.

Its subcellular location is the cytoplasm. The enzyme catalyses [protein]-L-isoaspartate + S-adenosyl-L-methionine = [protein]-L-isoaspartate alpha-methyl ester + S-adenosyl-L-homocysteine. Its function is as follows. Catalyzes the methyl esterification of L-isoaspartyl residues in peptides and proteins that result from spontaneous decomposition of normal L-aspartyl and L-asparaginyl residues. It plays a role in the repair and/or degradation of damaged proteins. The sequence is that of Protein-L-isoaspartate O-methyltransferase from Klebsiella pneumoniae subsp. pneumoniae (strain ATCC 700721 / MGH 78578).